We begin with the raw amino-acid sequence, 490 residues long: Calcium-dependent protein kinase 12 (490 aa).

Residues 22-280 form the Protein kinase domain; the sequence is YFLGQVLGQG…AHQVLCHPWI (259 aa). ATP contacts are provided by residues 28–36 and Lys51; that span reads LGQGQFGTT. Asp146 serves as the catalytic Proton acceptor. A Phosphoserine modification is found at Ser186. The autoinhibitory domain stretch occupies residues 286–316; the sequence is APDKPLDCAVVSRLKKFSAMNKLKKMALRVI. EF-hand domains lie at 323–358, 359–394, 395–430, and 434–464; these read EEIGGLKELFKMIDTDKSGTITFEELKDSMRRVGSE, LMESEIQELLRAADVDESGTIDYGEFLAATIHLNKL, EREENLVAAFSFFDKDASGYITIEELQQAWKEFGIN, and LDEMIKDIDQDNDGQIDYGEFVAMMRKGNGT. Ca(2+) contacts are provided by Asp336, Asp338, Ser340, Thr342, Glu347, Asp372, Asp374, Ser376, Thr378, Glu383, Asp408, Asp410, Ser412, Tyr414, Glu419, Asp442, Asp444, Asp446, Gln448, and Glu453.

The protein belongs to the protein kinase superfamily. Ser/Thr protein kinase family. CDPK subfamily. As to quaternary structure, interacts weakly with DI19. As to expression, ubiquitously expressed.

It carries out the reaction L-seryl-[protein] + ATP = O-phospho-L-seryl-[protein] + ADP + H(+). The catalysed reaction is L-threonyl-[protein] + ATP = O-phospho-L-threonyl-[protein] + ADP + H(+). Its activity is regulated as follows. Activated by calcium. Autophosphorylation may play an important role in the regulation of the kinase activity. Its function is as follows. May play a role in signal transduction pathways that involve calcium as a second messenger. The sequence is that of Calcium-dependent protein kinase 12 (CPK12) from Arabidopsis thaliana (Mouse-ear cress).